Reading from the N-terminus, the 98-residue chain is Small ribosomal subunit protein bS6 (98 aa).

This sequence belongs to the bacterial ribosomal protein bS6 family.

Its function is as follows. Binds together with bS18 to 16S ribosomal RNA. The chain is Small ribosomal subunit protein bS6 from Limosilactobacillus reuteri (strain DSM 20016) (Lactobacillus reuteri).